The chain runs to 239 residues: Ribonuclease PH (239 aa).

Phosphate contacts are provided by residues R88 and 126–128 (GTR).

It belongs to the RNase PH family. Homohexameric ring arranged as a trimer of dimers.

The enzyme catalyses tRNA(n+1) + phosphate = tRNA(n) + a ribonucleoside 5'-diphosphate. In terms of biological role, phosphorolytic 3'-5' exoribonuclease that plays an important role in tRNA 3'-end maturation. Removes nucleotide residues following the 3'-CCA terminus of tRNAs; can also add nucleotides to the ends of RNA molecules by using nucleoside diphosphates as substrates, but this may not be physiologically important. Probably plays a role in initiation of 16S rRNA degradation (leading to ribosome degradation) during starvation. This is Ribonuclease PH from Coxiella burnetii (strain Dugway 5J108-111).